An 86-amino-acid polypeptide reads, in one-letter code: YcgL domain-containing protein XOO0428 (86 aa).

The YcgL domain occupies methionine 1 to cysteine 83.

The polypeptide is YcgL domain-containing protein XOO0428 (Xanthomonas oryzae pv. oryzae (strain MAFF 311018)).